We begin with the raw amino-acid sequence, 513 residues long: Ribonuclease Y (513 aa).

A helical transmembrane segment spans residues 6 to 26 (YIIIAVVIIIICVILGLYVVD). The region spanning 203-288 (TVHVVNLPND…EMVEKAKKEV (86 aa)) is the KH domain. Residues 329–422 (VLKHSIEVSH…VQAADAISAA (94 aa)) enclose the HD domain.

This sequence belongs to the RNase Y family.

The protein localises to the cell membrane. In terms of biological role, endoribonuclease that initiates mRNA decay. The protein is Ribonuclease Y of Clostridium botulinum (strain Langeland / NCTC 10281 / Type F).